A 412-amino-acid chain; its full sequence is Citrate synthase (412 aa).

Catalysis depends on residues His-305 and Asp-364.

It belongs to the citrate synthase family.

The enzyme catalyses oxaloacetate + acetyl-CoA + H2O = citrate + CoA + H(+). The protein operates within carbohydrate metabolism; tricarboxylic acid cycle; isocitrate from oxaloacetate: step 1/2. In Rickettsia bellii, this protein is Citrate synthase (gltA).